We begin with the raw amino-acid sequence, 258 residues long: Large ribosomal subunit protein eL8z (258 aa).

The interval 1-20 (MAPKRGGRAPVPAKKKTEKV) is disordered.

Belongs to the eukaryotic ribosomal protein eL8 family.

The polypeptide is Large ribosomal subunit protein eL8z (RPL7A-1) (Oryza sativa subsp. japonica (Rice)).